The following is a 402-amino-acid chain: MKIVYVVGTCDTKGSELRYLRDLIRDAGCDVVLVDVSVSEFHSEASDVDVQPAEVARCHPNPLKAEELKDRGKAVAAMSQALVEYIRSRPDVDGIIGAGGSGGTALIAPAMRALPIGVPKVLVSTVASGNVAPYVGPTDISMMYSVTDVSGLNRISRVVLANAAHSIAGMVLKQVGAAADERPAIGLTMFGVTTPCVQAVTRALEANFDCLVFHATGTGGQSFEKLADSGLLVGGIDVSTTEVCDYLVGGVFPCTPDRFGAFARTKLPYVGSCGALDMVNFGAMETVPSQFRSRRLHVHNPQVTLMRTNPEECSRIGEWIGERLNLCEGPVRFLIPELGVSAIDAPGQPFHDPEADAVLFAALERTLRCTDKRQLARVPLHINDPQFADLLVTNLKEAFREH.

The protein belongs to the UPF0261 family.

In Mesorhizobium japonicum (strain LMG 29417 / CECT 9101 / MAFF 303099) (Mesorhizobium loti (strain MAFF 303099)), this protein is UPF0261 protein mll9388.